We begin with the raw amino-acid sequence, 122 residues long: Phospholipase A2 homolog ECS_00014 (122 aa).

Disulfide bonds link Cys-26-Cys-115, Cys-28-Cys-44, Cys-43-Cys-95, Cys-49-Cys-122, Cys-50-Cys-88, Cys-57-Cys-81, and Cys-75-Cys-86. The segment at 105-117 (KKYTYYPNFWCKG) is important for membrane-damaging activities in eukaryotes and bacteria; heparin-binding.

This sequence belongs to the phospholipase A2 family. Group II subfamily. S49 sub-subfamily. In terms of assembly, monomer. As to expression, expressed by the venom gland.

It localises to the secreted. In terms of biological role, snake venom phospholipase A2 homolog that lacks enzymatic activity. Shows high myotoxin activities and displays edema-inducing activities. Has cytotoxic activities against HUVEC cells (LC(50)=12.2 uL) and human lung adenocarcinoma A549 cells (LC(50)=8.5 uL). This is Phospholipase A2 homolog ECS_00014 from Echis carinatus sochureki (Saw-scaled viper).